We begin with the raw amino-acid sequence, 476 residues long: Serine--tRNA ligase (476 aa).

Threonine 280–glutamate 282 contributes to the L-serine binding site. Arginine 311 to glutamate 313 provides a ligand contact to ATP. Residue glutamate 334 participates in L-serine binding. Residue glutamate 401–serine 404 coordinates ATP. Serine 436 is a binding site for L-serine.

Belongs to the class-II aminoacyl-tRNA synthetase family. Type-1 seryl-tRNA synthetase subfamily. As to quaternary structure, homodimer. The tRNA molecule binds across the dimer.

The protein localises to the cytoplasm. The catalysed reaction is tRNA(Ser) + L-serine + ATP = L-seryl-tRNA(Ser) + AMP + diphosphate + H(+). It catalyses the reaction tRNA(Sec) + L-serine + ATP = L-seryl-tRNA(Sec) + AMP + diphosphate + H(+). It participates in aminoacyl-tRNA biosynthesis; selenocysteinyl-tRNA(Sec) biosynthesis; L-seryl-tRNA(Sec) from L-serine and tRNA(Sec): step 1/1. In terms of biological role, catalyzes the attachment of serine to tRNA(Ser). Is also able to aminoacylate tRNA(Sec) with serine, to form the misacylated tRNA L-seryl-tRNA(Sec), which will be further converted into selenocysteinyl-tRNA(Sec). This chain is Serine--tRNA ligase, found in Rhodopseudomonas palustris (strain HaA2).